The sequence spans 383 residues: 8-amino-7-oxononanoate synthase (383 aa).

Arg22 contacts substrate. 109–110 (GF) is a pyridoxal 5'-phosphate binding site. His134 provides a ligand contact to substrate. Pyridoxal 5'-phosphate-binding residues include Ser178, His206, and Thr232. Position 235 is an N6-(pyridoxal phosphate)lysine (Lys235). A substrate-binding site is contributed by Thr348.

The protein belongs to the class-II pyridoxal-phosphate-dependent aminotransferase family. BioF subfamily. In terms of assembly, homodimer. Requires pyridoxal 5'-phosphate as cofactor.

It carries out the reaction 6-carboxyhexanoyl-[ACP] + L-alanine + H(+) = (8S)-8-amino-7-oxononanoate + holo-[ACP] + CO2. The protein operates within cofactor biosynthesis; biotin biosynthesis. Functionally, catalyzes the decarboxylative condensation of pimeloyl-[acyl-carrier protein] and L-alanine to produce 8-amino-7-oxononanoate (AON), [acyl-carrier protein], and carbon dioxide. This Vibrio parahaemolyticus serotype O3:K6 (strain RIMD 2210633) protein is 8-amino-7-oxononanoate synthase.